Here is a 461-residue protein sequence, read N- to C-terminus: Nicotianamine aminotransferase A (461 aa).

The tract at residues Met-1–Gly-29 is disordered. The span at Ala-11–Gly-29 shows a compositional bias: low complexity. An N6-(pyridoxal phosphate)lysine modification is found at Lys-289.

This sequence belongs to the class-I pyridoxal-phosphate-dependent aminotransferase family. It depends on pyridoxal 5'-phosphate as a cofactor. In terms of tissue distribution, expressed in roots, but not in leaves.

The catalysed reaction is nicotianamine + 2-oxoglutarate = 3''-deamino-3''-oxonicotianamine + L-glutamate. Involved in biosynthesis of mugineic acid family phytosiderophores. The sequence is that of Nicotianamine aminotransferase A from Hordeum vulgare (Barley).